We begin with the raw amino-acid sequence, 452 residues long: Minor capsid protein (452 aa).

Composition is skewed to basic and acidic residues over residues 219-236 and 247-258; these read VDKPEDKPKPVFDDKGKQ and GKPDISKPGEKQ. Residues 219–258 are disordered; the sequence is VDKPEDKPKPVFDDKGKQPTDTVPPVDNGKPDISKPGEKQ.

It belongs to the closteroviridae minor capsid protein family.

It localises to the virion. Functionally, minor capsid protein that encapsidates the 5'-terminal portion of the viral genome. This chain is Minor capsid protein, found in Lettuce infectious yellows virus (isolate United States/92) (LIYV).